The following is a 266-amino-acid chain: Esterase AGAP003155 (266 aa).

Active-site charge relay system residues include Ser-114, Asp-172, and His-199. The disordered stretch occupies residues 231–266 (ATEENSFHLEGQEEAEESALQPVHEGLQNGSDSDSD).

Belongs to the LovG family.

This chain is Esterase AGAP003155, found in Anopheles gambiae (African malaria mosquito).